Here is a 354-residue protein sequence, read N- to C-terminus: Uroporphyrinogen decarboxylase (354 aa).

Residues 27–31 (RQAGR), Asp-77, Tyr-154, Thr-209, and His-327 each bind substrate.

It belongs to the uroporphyrinogen decarboxylase family. Homodimer.

The protein localises to the cytoplasm. It carries out the reaction uroporphyrinogen III + 4 H(+) = coproporphyrinogen III + 4 CO2. The protein operates within porphyrin-containing compound metabolism; protoporphyrin-IX biosynthesis; coproporphyrinogen-III from 5-aminolevulinate: step 4/4. Catalyzes the decarboxylation of four acetate groups of uroporphyrinogen-III to yield coproporphyrinogen-III. The polypeptide is Uroporphyrinogen decarboxylase (Escherichia coli (strain 55989 / EAEC)).